Consider the following 99-residue polypeptide: Putative pterin-4-alpha-carbinolamine dehydratase (99 aa).

It belongs to the pterin-4-alpha-carbinolamine dehydratase family.

It carries out the reaction (4aS,6R)-4a-hydroxy-L-erythro-5,6,7,8-tetrahydrobiopterin = (6R)-L-erythro-6,7-dihydrobiopterin + H2O. The sequence is that of Putative pterin-4-alpha-carbinolamine dehydratase from Saccharolobus islandicus (strain M.16.27) (Sulfolobus islandicus).